We begin with the raw amino-acid sequence, 333 residues long: tRNA N6-adenosine threonylcarbamoyltransferase (333 aa).

Residues H111 and H115 each contribute to the Fe cation site. Substrate is bound by residues 134–138 (VVSGG), D167, G180, D184, and N269. Fe cation is bound at residue D297.

It belongs to the KAE1 / TsaD family. Requires Fe(2+) as cofactor.

It is found in the cytoplasm. The enzyme catalyses L-threonylcarbamoyladenylate + adenosine(37) in tRNA = N(6)-L-threonylcarbamoyladenosine(37) in tRNA + AMP + H(+). In terms of biological role, required for the formation of a threonylcarbamoyl group on adenosine at position 37 (t(6)A37) in tRNAs that read codons beginning with adenine. Is involved in the transfer of the threonylcarbamoyl moiety of threonylcarbamoyl-AMP (TC-AMP) to the N6 group of A37, together with TsaE and TsaB. TsaD likely plays a direct catalytic role in this reaction. This Carboxydothermus hydrogenoformans (strain ATCC BAA-161 / DSM 6008 / Z-2901) protein is tRNA N6-adenosine threonylcarbamoyltransferase.